The primary structure comprises 498 residues: MRTNPTTSRPGVSTIEEKSVGRIDQIIGPVLDITFPPGKLPNIYNALIVKSRDTADKQINVTCEVQQLLGNNRVRAVAMSATDGLMRGMEVIDTGTPLSVPVGGATLGRIFNVLGEPIDNLGPVDTSATFPIHRSAPAFIELDTKLSIFETGIKVVDLLAPYRRGGKIGLFGGAGVGKTVLIMELINNIAKAHGGVSVFGGVGERTREGNDLYMEMKESGVINEKNIEESKVALVYGQMNEPPGARMRVGLTALTMAEYFRDVNKQDVLLFIDNIFRFVQAGSEVSALLGRMPSAVGYQPTLSTEMGSLQERITSTKKGSITSIQAVYVPADDLTDPAPATTFAHLDATTVLSRGLASKGIYPAVDPLDSTSTMLQPRIVGNEHYETAQRVKETLQRYKELQDIIAILGLDELSEEDRLTVARARKIERFLSQPFFVAEVFTGSPGKYVGLAETIRGFQLILSGELDGLPEQAFYLVGNIDEASTKAINLEEESKLKK.

172-179 (GGAGVGKT) lines the ATP pocket.

This sequence belongs to the ATPase alpha/beta chains family. F-type ATPases have 2 components, CF(1) - the catalytic core - and CF(0) - the membrane proton channel. CF(1) has five subunits: alpha(3), beta(3), gamma(1), delta(1), epsilon(1). CF(0) has four main subunits: a(1), b(1), b'(1) and c(9-12).

Its subcellular location is the plastid. The protein localises to the chloroplast thylakoid membrane. It carries out the reaction ATP + H2O + 4 H(+)(in) = ADP + phosphate + 5 H(+)(out). Functionally, produces ATP from ADP in the presence of a proton gradient across the membrane. The catalytic sites are hosted primarily by the beta subunits. The chain is ATP synthase subunit beta, chloroplastic from Saccharum hybrid (Sugarcane).